The primary structure comprises 239 residues: MSLMKEMLSAGVHFGHKKAFWNPQMKEYIFGINHGVHIINLEKTVPLFQDAVNFVGKTVANGGKILFVGTKRQAQDIVEAEAKRCGMPFVSHRWLGGMLTNYKTVRQSIKRLAQLEKMREDGTLESLTKKEMLQNIRTIEKLEKVLGGIKEMGGLPDAIVVIDSNKEHIAIQEAQKLGIKVVAIVDTNSNPEGIDYIIPGNDDAVKSISFYMKKFADAVIDAQGLDRAVEAKADEAVQA.

This sequence belongs to the universal ribosomal protein uS2 family.

This is Small ribosomal subunit protein uS2 from Francisella tularensis subsp. novicida (strain U112).